The sequence spans 821 residues: Probable E3 ubiquitin-protein ligase hulA (821 aa).

The region spanning 1–112 is the C2 domain; sequence MGSNLPAQPN…QMGGDEMLTR (112 aa). Disordered stretches follow at residues 140-240 and 255-359; these read PNQA…WERR and RTTT…YFVD. Composition is skewed to polar residues over residues 151-173, 181-201, 217-228, and 255-272; these read AQSS…SVSP, AASN…PTST, QGSRTNLSSFED, and RTTT…QTQR. A WW 1 domain is found at 231–264; that stretch reads GRLPAGWERREDNLGRTYYVDHNTRTTTWTRPSS. The segment covering 281-296 has biased composition (basic and acidic residues); sequence LERRAHQSRMLPEDRT. Residues 297-306 are compositionally biased toward polar residues; sequence GANSPNLQES. The span at 311–339 shows a compositional bias: low complexity; the sequence is PQQAHTPPAGGSASAVSMMATGATTAGTG. 2 consecutive WW domains span residues 339-372 and 399-432; these read GELP…DPRR and GPLP…DPRL. The HECT domain occupies 488-821; it reads SASDLKKRLM…VEETLGFGQE (334 aa). Catalysis depends on Cys-789, which acts as the Glycyl thioester intermediate.

It belongs to the RSP5/NEDD4 family. In terms of assembly, interacts with creD.

It is found in the cytoplasm. The enzyme catalyses S-ubiquitinyl-[E2 ubiquitin-conjugating enzyme]-L-cysteine + [acceptor protein]-L-lysine = [E2 ubiquitin-conjugating enzyme]-L-cysteine + N(6)-ubiquitinyl-[acceptor protein]-L-lysine.. Its pathway is protein modification; protein ubiquitination. Functionally, E3 ubiquitin-protein ligase which accepts ubiquitin from an E2 ubiquitin-conjugating enzyme in the form of a thioester and then directly transfers the ubiquitin to targeted substrates. Probably involved in the regulatory network controlling carbon source utilization. The polypeptide is Probable E3 ubiquitin-protein ligase hulA (hulA) (Aspergillus niger (strain ATCC MYA-4892 / CBS 513.88 / FGSC A1513)).